Here is a 510-residue protein sequence, read N- to C-terminus: MKEFQRYIELDRSWQHNFFYPLIFQEYIYGFAYDPDLKKSILLENAGDKKYSLLIVKRLITRMYQQQNHLILFANHSNQNDFWGHKHTNNLYYQIISEVFAFIVEIPFSLLLISSLESKKRKIVKSHNLRSIHSIFPFFEDKFLHLNYVLEILIPYPIHLEILVQTLRYWMKDASSLHLLRFFLYEYRNWNSLITSQKSISIFSKRNKRLFLFLYNFHVCEYESIFVFFCNQSSHLRSTSFGVLLERIYFYGKLEYLVKVFPFTKDFRLILWLFKEPFPHYVRYRGKSILASKGTSLLMHKWKYYLINFWQCYFSLWSQPTRIYINQLSKHSLDFMGFFSSVQLNSSVVRSQMVENSFLIENTMKKFDTIVRIIPLVGSLAKANFCNVLGHPISKSVWTDLLDSDIIDRFGCICRNLSHYYSGSSRKKTLYRIKYILRLSCARTLARKHKSTVRAFLKRLGSEFLEEFFTEEEKVLSLILPRDSSIARGFYRGPIWYLDIICIHDLANDE.

Belongs to the intron maturase 2 family. MatK subfamily.

It is found in the plastid. Its subcellular location is the chloroplast. Usually encoded in the trnK tRNA gene intron. Probably assists in splicing its own and other chloroplast group II introns. In Grahamia bracteata, this protein is Maturase K.